The following is a 122-amino-acid chain: Large ribosomal subunit protein uL14 (122 aa).

It belongs to the universal ribosomal protein uL14 family. Part of the 50S ribosomal subunit. Forms a cluster with proteins L3 and L19. In the 70S ribosome, L14 and L19 interact and together make contacts with the 16S rRNA in bridges B5 and B8.

Functionally, binds to 23S rRNA. Forms part of two intersubunit bridges in the 70S ribosome. The polypeptide is Large ribosomal subunit protein uL14 (Afipia carboxidovorans (strain ATCC 49405 / DSM 1227 / KCTC 32145 / OM5) (Oligotropha carboxidovorans)).